A 382-amino-acid chain; its full sequence is Carboxynorspermidine/carboxyspermidine decarboxylase (382 aa).

Position 41 is an N6-(pyridoxal phosphate)lysine (K41). Substrate contacts are provided by E236 and D272.

It belongs to the Orn/Lys/Arg decarboxylase class-II family. NspC subfamily. In terms of assembly, homodimer. Pyridoxal 5'-phosphate serves as cofactor.

The protein resides in the cytoplasm. It catalyses the reaction carboxynorspermidine + H(+) = norspermidine + CO2. The catalysed reaction is carboxyspermidine + H(+) = spermidine + CO2. Catalyzes the decarboxylation of carboxynorspermidine and carboxyspermidine in vitro. In vivo, responsible for synthesizing spermidine, but not sym-norspermidine. The protein is Carboxynorspermidine/carboxyspermidine decarboxylase of Campylobacter jejuni subsp. jejuni serotype O:6 (strain 81116 / NCTC 11828).